The following is a 275-amino-acid chain: Phosphate import ATP-binding protein PstB 1 (275 aa).

Positions 22–261 constitute an ABC transporter domain; sequence FNVEGVKVYY…SPTEQMFNSP (240 aa). 54–61 serves as a coordination point for ATP; the sequence is GPSGCGKS.

This sequence belongs to the ABC transporter superfamily. Phosphate importer (TC 3.A.1.7) family. In terms of assembly, the complex is composed of two ATP-binding proteins (PstB), two transmembrane proteins (PstC and PstA) and a solute-binding protein (PstS).

It localises to the cell inner membrane. It catalyses the reaction phosphate(out) + ATP + H2O = ADP + 2 phosphate(in) + H(+). Its function is as follows. Part of the ABC transporter complex PstSACB involved in phosphate import. Responsible for energy coupling to the transport system. This chain is Phosphate import ATP-binding protein PstB 1, found in Trichormus variabilis (strain ATCC 29413 / PCC 7937) (Anabaena variabilis).